We begin with the raw amino-acid sequence, 391 residues long: Lysophosphatidylinositol acyltransferase 10 (391 aa).

5 helical membrane-spanning segments follow: residues 10–30 (LLGW…NYII), 52–72 (AISY…GVRI), 97–119 (WMYM…KISL), 323–343 (LTSL…IFFV), and 347–367 (QLGF…YGGI).

The protein belongs to the 1-acyl-sn-glycerol-3-phosphate acyltransferase family. Expressed in seam cells, vulval epithelial cells and the major epithelial syncytium hyp7, and in several head neurons including AIY interneurons.

It localises to the endoplasmic reticulum membrane. It catalyses the reaction a 2-acyl-sn-glycero-3-phospho-D-myo-inositol + an acyl-CoA = a 1,2-diacyl-sn-glycero-3-phospho-(1D-myo-inositol) + CoA. It carries out the reaction a 2-acyl-sn-glycero-3-phospho-D-myo-inositol + octadecanoyl-CoA = 1-octadecanoyl-2-acyl-sn-glycero-3-phospho-1D-myo-inositol + CoA. It participates in phospholipid metabolism; phosphatidylinositol metabolism. Functionally, acyltransferase required for the fatty acid remodeling of phosphatidylinositol (1,2-diacyl-sn-glycero-3-phosphoinositol or PI). Mediates the conversion of lysophosphatidylinositol (2-acylglycerophosphatidylinositol or LPI) into PI (LPIAT activity). Has preference for saturated and mono-unsaturated fatty acids as acyl donors and sn-2-acyl lysoPI (2-acyl-sn-glycero-3-phospho-D-myo-inositol) as acyl acceptor. Contributes to the asymmetric cell division of epithelial cells. Asymmetric cell division is the fundamental mechanism by which multicellular organisms generate cell diversity. The chain is Lysophosphatidylinositol acyltransferase 10 from Caenorhabditis elegans.